Consider the following 344-residue polypeptide: Phenylalanine--tRNA ligase alpha subunit (344 aa).

Glu255 contributes to the Mg(2+) binding site.

This sequence belongs to the class-II aminoacyl-tRNA synthetase family. Phe-tRNA synthetase alpha subunit type 1 subfamily. Tetramer of two alpha and two beta subunits. Mg(2+) is required as a cofactor.

It is found in the cytoplasm. The enzyme catalyses tRNA(Phe) + L-phenylalanine + ATP = L-phenylalanyl-tRNA(Phe) + AMP + diphosphate + H(+). This is Phenylalanine--tRNA ligase alpha subunit from Sulfurihydrogenibium sp. (strain YO3AOP1).